Consider the following 81-residue polypeptide: Sulfur carrier protein TusA (81 aa).

Catalysis depends on C19, which acts as the Cysteine persulfide intermediate.

It belongs to the sulfur carrier protein TusA family.

The protein resides in the cytoplasm. In terms of biological role, sulfur carrier protein which probably makes part of a sulfur-relay system. The polypeptide is Sulfur carrier protein TusA (Shewanella denitrificans (strain OS217 / ATCC BAA-1090 / DSM 15013)).